The primary structure comprises 239 residues: 1-(5-phosphoribosyl)-5-[(5-phosphoribosylamino)methylideneamino] imidazole-4-carboxamide isomerase (239 aa).

D8 serves as the catalytic Proton acceptor. D129 (proton donor) is an active-site residue.

Belongs to the HisA/HisF family.

The protein localises to the cytoplasm. It carries out the reaction 1-(5-phospho-beta-D-ribosyl)-5-[(5-phospho-beta-D-ribosylamino)methylideneamino]imidazole-4-carboxamide = 5-[(5-phospho-1-deoxy-D-ribulos-1-ylimino)methylamino]-1-(5-phospho-beta-D-ribosyl)imidazole-4-carboxamide. Its pathway is amino-acid biosynthesis; L-histidine biosynthesis; L-histidine from 5-phospho-alpha-D-ribose 1-diphosphate: step 4/9. In Cereibacter sphaeroides (strain ATCC 17029 / ATH 2.4.9) (Rhodobacter sphaeroides), this protein is 1-(5-phosphoribosyl)-5-[(5-phosphoribosylamino)methylideneamino] imidazole-4-carboxamide isomerase.